We begin with the raw amino-acid sequence, 985 residues long: Probable beta-galactosidase C (985 aa).

The first 23 residues, 1–23 (MRILSLLFLLLLGFLAGNRVVSA), serve as a signal peptide directing secretion. Tyr-82, Asn-127, Ala-128, Glu-129, and Asn-187 together coordinate substrate. Residue Glu-188 is the Proton donor of the active site. Tyr-251 is a binding site for substrate. Residues Cys-257 and Cys-304 are joined by a disulfide bond. A glycan (N-linked (GlcNAc...) asparagine) is linked at Asn-276. Catalysis depends on Glu-287, which acts as the Nucleophile. Position 353 (Tyr-353) interacts with substrate. Asn-391, Asn-434, Asn-517, Asn-602, Asn-677, Asn-715, Asn-720, and Asn-759 each carry an N-linked (GlcNAc...) asparagine glycan.

Belongs to the glycosyl hydrolase 35 family.

The protein resides in the secreted. The catalysed reaction is Hydrolysis of terminal non-reducing beta-D-galactose residues in beta-D-galactosides.. Functionally, cleaves beta-linked terminal galactosyl residues from gangliosides, glycoproteins, and glycosaminoglycans. The polypeptide is Probable beta-galactosidase C (lacC) (Aspergillus clavatus (strain ATCC 1007 / CBS 513.65 / DSM 816 / NCTC 3887 / NRRL 1 / QM 1276 / 107)).